A 587-amino-acid polypeptide reads, in one-letter code: MVAAAMLLRSCPVLSQGPTGLLGKVAKTYQFLFSIGRCPILATQGPTCSQIHLKATKAGGDSPSWAKSHCPFMLSELQDRKSKIVQRAAPEVQEDVKTFKTDLLSTMDSTTRSHSFPSFQEPEQTEGAVPHLIQNNMTGSQAFGYDQFFRDKIMEKKQDHTYRVFKTVNRWANAYPFAQHFSEASMASKDVSVWCSNDYLGISRHPRVLQAIEETLKNHGAGAGGTRNISGTSKFHVELEQELAELHQKDSALLFSSCFVANDSTLFTLAKLLPGCEIYSDAGNHASMIQGIRNSGAAKFVFRHNDPGHLKKLLEKSDPKTPKIVAFETVHSMDGAICPLEELCDVAHQYGALTFVDEVHAVGLYGARGAGIGERDGIMHKLDIISGTLGKAFGCVGGYIASTRDLVDMVRSYAAGFIFTTSLPPMVLSGALESVRLLKGEEGQALRRAHQRNVKHMRQLLMDRGFPVIPCPSHIIPIRVGNAALNSKICDLLLSKHSIYVQAINYPTVPRGEELLRLAPSPHHSPQMMENFVEKLLLAWTEVGLPLQDVSVAACNFCHRPVHFELMSEWERSYFGNMGPQYVTTYA.

The transit peptide at 1 to 49 (MVAAAMLLRSCPVLSQGPTGLLGKVAKTYQFLFSIGRCPILATQGPTCS) directs the protein to the mitochondrion. A succinyl-CoA-binding site is contributed by R163. 2 residues coordinate pyridoxal 5'-phosphate: C258 and F259. S280 and K299 together coordinate succinyl-CoA. Residues S332, H360, and T388 each coordinate pyridoxal 5'-phosphate. Residue K391 is part of the active site. Position 391 is an N6-(pyridoxal phosphate)lysine (K391). Pyridoxal 5'-phosphate contacts are provided by T420 and T421. T508 is a binding site for succinyl-CoA.

The protein belongs to the class-II pyridoxal-phosphate-dependent aminotransferase family. As to quaternary structure, homodimer. Interacts with SUCLA2. Pyridoxal 5'-phosphate serves as cofactor. Predomnantly expressed in erythroid cells.

The protein localises to the mitochondrion inner membrane. Its subcellular location is the mitochondrion. The catalysed reaction is succinyl-CoA + glycine + H(+) = 5-aminolevulinate + CO2 + CoA. It participates in porphyrin-containing compound metabolism; protoporphyrin-IX biosynthesis; 5-aminolevulinate from glycine: step 1/1. In terms of biological role, catalyzes the pyridoxal 5'-phosphate (PLP)-dependent condensation of succinyl-CoA and glycine to form aminolevulinic acid (ALA), with CoA and CO2 as by-products. Contributes significantly to heme formation during erythropoiesis. This Mus musculus (Mouse) protein is 5-aminolevulinate synthase, erythroid-specific, mitochondrial (Alas2).